Here is a 233-residue protein sequence, read N- to C-terminus: Pilin-like protein PilA3 (233 aa).

A propeptide spans 1–4 (MKRG) (leader sequence). F5 is modified (N-methylphenylalanine). Residues 5–25 (FTLVEVLVAMAILVVVLAVGV) form a helical membrane-spanning segment. The disordered stretch occupies residues 121 to 143 (LRRSDVNATPSSGSDCTTPPPNS). Residues 126-137 (VNATPSSGSDCT) are compositionally biased toward polar residues.

It localises to the cell inner membrane. The protein localises to the cell outer membrane. It is found in the periplasm. Functionally, plays an essential role in natural DNA transformation but is not required for pilus biogenesis. In Thermus thermophilus (strain ATCC BAA-163 / DSM 7039 / HB27), this protein is Pilin-like protein PilA3 (pilA3).